Here is a 71-residue protein sequence, read N- to C-terminus: Small ribosomal subunit protein bS21 (71 aa).

Belongs to the bacterial ribosomal protein bS21 family.

This Chromohalobacter salexigens (strain ATCC BAA-138 / DSM 3043 / CIP 106854 / NCIMB 13768 / 1H11) protein is Small ribosomal subunit protein bS21.